A 158-amino-acid chain; its full sequence is Glycogen accumulation regulator GarA (158 aa).

T20 is subject to Phosphothreonine; by PknG. T21 bears the Phosphothreonine; by PknB mark. One can recognise an FHA domain in the interval 76-125 (TSAGRHPDSDIFLDDVTVSRRHAEFRLEGGEFQVVDVGSLNGTYVNREPV).

As to quaternary structure, monomer. Binds via its FHA domain to Kgd, Gdh, and the N-terminal region of PknG. In terms of processing, phosphorylated on Thr-21 by PknB. Phosphorylated on Thr-20 by PknG. Phosphorylation at either Thr-20 or Thr-21 prevents binding to target enzymes.

In terms of biological role, involved in regulation of glutamate metabolism. Acts as a phosphorylation-dependent molecular switch that modulates the activities of Kgd and Gdh. The sequence is that of Glycogen accumulation regulator GarA (garA) from Mycolicibacterium smegmatis (strain ATCC 700084 / mc(2)155) (Mycobacterium smegmatis).